Here is a 267-residue protein sequence, read N- to C-terminus: Regulatory protein RecX (267 aa).

Belongs to the RecX family.

The protein resides in the cytoplasm. Functionally, modulates RecA activity. In Leuconostoc mesenteroides subsp. mesenteroides (strain ATCC 8293 / DSM 20343 / BCRC 11652 / CCM 1803 / JCM 6124 / NCDO 523 / NBRC 100496 / NCIMB 8023 / NCTC 12954 / NRRL B-1118 / 37Y), this protein is Regulatory protein RecX.